The primary structure comprises 376 residues: Succinyl-diaminopimelate desuccinylase (376 aa).

His-66 serves as a coordination point for Zn(2+). The active site involves Asp-68. Asp-99 contributes to the Zn(2+) binding site. The active-site Proton acceptor is the Glu-133. The Zn(2+) site is built by Glu-134, Glu-162, and His-348.

Belongs to the peptidase M20A family. DapE subfamily. In terms of assembly, homodimer. Zn(2+) is required as a cofactor. Requires Co(2+) as cofactor.

It carries out the reaction N-succinyl-(2S,6S)-2,6-diaminopimelate + H2O = (2S,6S)-2,6-diaminopimelate + succinate. It participates in amino-acid biosynthesis; L-lysine biosynthesis via DAP pathway; LL-2,6-diaminopimelate from (S)-tetrahydrodipicolinate (succinylase route): step 3/3. Functionally, catalyzes the hydrolysis of N-succinyl-L,L-diaminopimelic acid (SDAP), forming succinate and LL-2,6-diaminopimelate (DAP), an intermediate involved in the bacterial biosynthesis of lysine and meso-diaminopimelic acid, an essential component of bacterial cell walls. The chain is Succinyl-diaminopimelate desuccinylase from Thioalkalivibrio sulfidiphilus (strain HL-EbGR7).